Consider the following 230-residue polypeptide: Potassium/proton antiporter CemA (230 aa).

4 helical membrane passes run 7–27, 107–127, 145–165, and 181–201; these read LPSLLYLVFIVLLPWGVSSSF, ILHFSTNIICLAILSGSFFLG, LNDSIKAFFILLVTDFFVGFH, and FGWAPNELIFTIFVCSFPVIL.

The protein belongs to the CemA family.

Its subcellular location is the plastid. The protein resides in the chloroplast inner membrane. The enzyme catalyses K(+)(in) + H(+)(out) = K(+)(out) + H(+)(in). Its function is as follows. Contributes to K(+)/H(+) antiport activity by supporting proton efflux to control proton extrusion and homeostasis in chloroplasts in a light-dependent manner to modulate photosynthesis. Prevents excessive induction of non-photochemical quenching (NPQ) under continuous-light conditions. Indirectly promotes efficient inorganic carbon uptake into chloroplasts. This chain is Potassium/proton antiporter CemA, found in Triticum aestivum (Wheat).